Here is a 172-residue protein sequence, read N- to C-terminus: MVDKRESYSKEDLIASGRGELFGQDGPPLPSGNMLMMDRIIKMTEDGGSHNKGFIEAEFDIKPDLWFFDCHFVNDPVMPGCLGLDAMWQLVGFYLGWLGGEGKGRALGVGEVKFTGQILPTAKKVTYKIDFKRVINRKLIMGIADGEVYVDGKLIYEAKDLKVGLFKDTSAF.

Histidine 71 is a catalytic residue.

This sequence belongs to the thioester dehydratase family. FabA subfamily. Homodimer.

It localises to the cytoplasm. It carries out the reaction a (3R)-hydroxyacyl-[ACP] = a (2E)-enoyl-[ACP] + H2O. The enzyme catalyses (3R)-hydroxydecanoyl-[ACP] = (2E)-decenoyl-[ACP] + H2O. It catalyses the reaction (2E)-decenoyl-[ACP] = (3Z)-decenoyl-[ACP]. It functions in the pathway lipid metabolism; fatty acid biosynthesis. In terms of biological role, necessary for the introduction of cis unsaturation into fatty acids. Catalyzes the dehydration of (3R)-3-hydroxydecanoyl-ACP to E-(2)-decenoyl-ACP and then its isomerization to Z-(3)-decenoyl-ACP. Can catalyze the dehydratase reaction for beta-hydroxyacyl-ACPs with saturated chain lengths up to 16:0, being most active on intermediate chain length. This Proteus mirabilis (strain HI4320) protein is 3-hydroxydecanoyl-[acyl-carrier-protein] dehydratase.